We begin with the raw amino-acid sequence, 571 residues long: Urease subunit alpha (571 aa).

The Urease domain maps to 133-571 (GGVDSHIHFI…LPLAQRYFLF (439 aa)). Positions 138, 140, and 221 each coordinate Ni(2+). Position 221 is an N6-carboxylysine (K221). Position 223 (H223) interacts with substrate. 2 residues coordinate Ni(2+): H250 and H276. Catalysis depends on H324, which acts as the Proton donor. D364 provides a ligand contact to Ni(2+).

This sequence belongs to the metallo-dependent hydrolases superfamily. Urease alpha subunit family. As to quaternary structure, heterotrimer of UreA (gamma), UreB (beta) and UreC (alpha) subunits. Three heterotrimers associate to form the active enzyme. Ni cation serves as cofactor. Post-translationally, carboxylation allows a single lysine to coordinate two nickel ions.

The protein localises to the cytoplasm. The catalysed reaction is urea + 2 H2O + H(+) = hydrogencarbonate + 2 NH4(+). It functions in the pathway nitrogen metabolism; urea degradation; CO(2) and NH(3) from urea (urease route): step 1/1. This chain is Urease subunit alpha, found in Anaeromyxobacter sp. (strain Fw109-5).